We begin with the raw amino-acid sequence, 300 residues long: Cathepsin B-like CP2 (300 aa).

The signal sequence occupies residues 1–19 (MKLFLLAAAAFSAPALTVS). Disulfide bonds link cysteine 88–cysteine 115, cysteine 98–cysteine 141, and cysteine 134–cysteine 177. Residue cysteine 101 is part of the active site. Residues histidine 245 and asparagine 266 contribute to the active site.

It belongs to the peptidase C1 family.

The protein resides in the vacuole. In terms of biological role, thiol protease which is required for parasite excystation and invasion of the proximal small intestine of the human host. The chain is Cathepsin B-like CP2 (CP2) from Giardia intestinalis (Giardia lamblia).